Here is a 794-residue protein sequence, read N- to C-terminus: Striatin-3 (794 aa).

N-acetylmethionine is present on methionine 1. Residues 1 to 12 (MDELAGGGGGQG) show a composition bias toward gly residues. Positions 1–59 (MDELAGGGGGQGMAVPPRPQQGPGGNLSLPPGANGAPGGGGPPAAETAGPPAGPELSRP) are disordered. The caveolin-binding stretch occupies residues 70 to 78 (YIQHEWARF). A coiled-coil region spans residues 76–135 (ARFEMERAHWEVERAELQARIAFLQGERKGQENLKKDLVRRIKMLEYALKQERAKYHKLK). Position 149 is a phosphothreonine (threonine 149). Positions 164 to 181 (QNSQLTWKQGRQLLRQYL) are calmodulin-binding. Phosphoserine is present on residues serine 200, serine 212, serine 227, serine 255, and serine 332. A disordered region spans residues 309 to 339 (EDGEGAGEARSSGDGTEWDKDDLSPTAEVWD). 6 WD repeats span residues 475 to 514 (SHFD…PAKK), 528 to 567 (AHIG…VDPY), 581 to 620 (AHTD…PCIC), 676 to 715 (QSSN…MIHS), 718 to 757 (AHLD…CVQE), and 764 to 794 (KLDE…KVFV).

This sequence belongs to the WD repeat striatin family. As to quaternary structure, tetramerizes. Part of the core of STRIPAK complexes composed of PP2A catalytic and scaffolding subunits, the striatins (PP2A regulatory subunits), the striatin-associated proteins MOB4, STRIP1 and STRIP2, PDCD10 and members of the STE20 kinases, such as STK24 and STK26. The STRIPAK complex can be extended by adapter proteins such as SLMAP:SIKE1 or CTTNBP2NL. Interacts with CDC42BPB.

Its subcellular location is the cytoplasm. It is found in the membrane. Calmodulin-binding scaffolding protein which is the center of the striatin-interacting phosphatase and kinase (STRIPAK) complexes. STRIPAK complexes have critical roles in protein (de)phosphorylation and are regulators of multiple signaling pathways including Hippo, MAPK, nuclear receptor and cytoskeleton remodeling. Different types of STRIPAK complexes are involved in a variety of biological processes such as cell growth, differentiation, apoptosis, metabolism and immune regulation. The protein is Striatin-3 (Strn3) of Rattus norvegicus (Rat).